A 258-amino-acid chain; its full sequence is Ubiquinone/menaquinone biosynthesis C-methyltransferase UbiE (258 aa).

Residues threonine 81, aspartate 102, and 130 to 131 (NA) each bind S-adenosyl-L-methionine.

Belongs to the class I-like SAM-binding methyltransferase superfamily. MenG/UbiE family.

The catalysed reaction is a 2-demethylmenaquinol + S-adenosyl-L-methionine = a menaquinol + S-adenosyl-L-homocysteine + H(+). It carries out the reaction a 2-methoxy-6-(all-trans-polyprenyl)benzene-1,4-diol + S-adenosyl-L-methionine = a 5-methoxy-2-methyl-3-(all-trans-polyprenyl)benzene-1,4-diol + S-adenosyl-L-homocysteine + H(+). It functions in the pathway quinol/quinone metabolism; menaquinone biosynthesis; menaquinol from 1,4-dihydroxy-2-naphthoate: step 2/2. The protein operates within cofactor biosynthesis; ubiquinone biosynthesis. Methyltransferase required for the conversion of demethylmenaquinol (DMKH2) to menaquinol (MKH2) and the conversion of 2-polyprenyl-6-methoxy-1,4-benzoquinol (DDMQH2) to 2-polyprenyl-3-methyl-6-methoxy-1,4-benzoquinol (DMQH2). The chain is Ubiquinone/menaquinone biosynthesis C-methyltransferase UbiE from Rhizobium rhizogenes (strain K84 / ATCC BAA-868) (Agrobacterium radiobacter).